Consider the following 1107-residue polypeptide: DNA polymerase delta catalytic subunit (1107 aa).

Positions 1–34 (MDGKRRPGPGPGVPPKRARGGLWDDDDAPRPSQF) are disordered. The Nuclear localization signal signature appears at 4-19 (KRRPGPGPGVPPKRAR). Position 19 is an omega-N-methylarginine (R19). Residue K574 forms a Glycyl lysine isopeptide (Lys-Gly) (interchain with G-Cter in SUMO2) linkage. Residues C1012, C1015, C1026, and C1029 each contribute to the Zn(2+) site. The CysA-type zinc finger occupies 1012–1029 (CIGCRTVLSHQGAVCEFC). Residues C1058, C1061, C1071, and C1076 each contribute to the [4Fe-4S] cluster site. The CysB motif signature appears at 1058-1076 (CQRCQGSLHEDVICTSRDC).

It belongs to the DNA polymerase type-B family. As to quaternary structure, component of the tetrameric DNA polymerase delta complex (Pol-delta4), which consists of POLD1/p125, POLD2/p50, POLD3/p66/p68 and POLD4/p12, with POLD1 bearing both DNA polymerase and 3' to 5' proofreading exonuclease activities. Within Pol-delta4, directly interacts with POLD2 and POLD4. Following genotoxic stress by DNA-damaging agents, such as ultraviolet light and methyl methanesulfonate, or by replication stress induced by treatment with hydroxyurea or aphidicolin, Pol-delta4 is converted into a trimeric form of the complex (Pol-delta3) by POLD4 degradation. Pol-delta3 is the major form at S phase replication sites and DNA damage sites. POLD1 displays different catalytic properties depending upon the complex it is found in. It exhibits higher proofreading activity and fidelity than Pol-delta4, making it particularly well suited to respond to DNA damage. Directly interacts with PCNA, as do POLD3 and POLD4; this interaction stimulates Pol-delta4 polymerase activity. As POLD2 and POLD4, directly interacts with WRNIP1; this interaction stimulates DNA polymerase delta-mediated DNA synthesis, independently of the presence of PCNA. This stimulation may be due predominantly to an increase of initiation frequency and also to increased processivity. Also observed as a dimeric complex with POLD2 (Pol-delta2 complex). Pol-delta2 is relatively insensitive to the PCNA stimulation (2-5-fold) compared to Pol-delta4 that is stimulated by over 50-fold. The DNA polymerase delta complex interacts with POLDIP2; this interaction is probably mediated through direct binding to POLD2. Interacts with CIAO1. Interacts with POLDIP2. Interacts with RFC1. [4Fe-4S] cluster serves as cofactor. Widely expressed, with high levels of expression in heart and lung.

The protein resides in the nucleus. The catalysed reaction is DNA(n) + a 2'-deoxyribonucleoside 5'-triphosphate = DNA(n+1) + diphosphate. With respect to regulation, regulated by alteration of quaternary structure. Exhibits burst rates of DNA synthesis are about 5 times faster in the presence of POLD4 (Pol-delta4 complex) than in its absence (Pol-delta3 complex), while the affinity of the enzyme for its DNA and dNTP substrates appears unchanged. The Pol-delta3 complex is more likely to proofread DNA synthesis because it cleaves single-stranded DNA twice as fast and transfers mismatched DNA from the polymerase to the exonuclease sites 9 times faster compared to the Pol-delta3 complex. Pol-delta3 also extends mismatched primers 3 times more slowly in the absence of POLD4. The conversion of Pol-delta4 into Pol-delta3 is induced by genotoxic stress or by replication stress leading POLD4 degradation. Stimulated in the presence of PCNA. This stimulation is further increased in the presence of KCTD13/PDIP1, most probably via direct interaction between KCTD13 and POLD2. Functionally, as the catalytic component of the trimeric (Pol-delta3 complex) and tetrameric DNA polymerase delta complexes (Pol-delta4 complex), plays a crucial role in high fidelity genome replication, including in lagging strand synthesis, and repair. Exhibits both DNA polymerase and 3'- to 5'-exonuclease activities. Requires the presence of accessory proteins POLD2, POLD3 and POLD4 for full activity. Depending upon the absence (Pol-delta3) or the presence of POLD4 (Pol-delta4), displays differences in catalytic activity. Most notably, expresses higher proofreading activity in the context of Pol-delta3 compared with that of Pol-delta4. Although both Pol-delta3 and Pol-delta4 process Okazaki fragments in vitro, Pol-delta3 may be better suited to fulfill this task, exhibiting near-absence of strand displacement activity compared to Pol-delta4 and stalling on encounter with the 5'-blocking oligonucleotides. Pol-delta3 idling process may avoid the formation of a gap, while maintaining a nick that can be readily ligated. Along with DNA polymerase kappa, DNA polymerase delta carries out approximately half of nucleotide excision repair (NER) synthesis following UV irradiation. Under conditions of DNA replication stress, in the presence of POLD3 and POLD4, may catalyze the repair of broken replication forks through break-induced replication (BIR). Involved in the translesion synthesis (TLS) of templates carrying O6-methylguanine, 8oxoG or abasic sites. The polypeptide is DNA polymerase delta catalytic subunit (Homo sapiens (Human)).